The sequence spans 155 residues: Gastrin-releasing peptide (155 aa).

The first 31 residues, 1–31, serve as a signal peptide directing secretion; sequence MEGVLLFWKYRALFFLVLCSLVLCKVHLSQA. Position 60 is a methionine amide (methionine 60). Residues 128-155 constitute a propeptide that is removed on maturation; sequence FSGAEDNNLKEMLDYLYQMMNMKENTSS.

The protein belongs to the bombesin/neuromedin-B/ranatensin family. Brain and stomach. In the stomach GRP was localized, at the base of the gastric pits, to occasional cells whose distribution and appearance were consistent with that of gut neuroendocrine cells.

It is found in the secreted. The protein localises to the cytoplasmic vesicle. The protein resides in the secretory vesicle lumen. Functionally, stimulates the release of gastrin and other gastrointestinal hormones. This is Gastrin-releasing peptide (grp) from Bombina orientalis (Oriental fire-bellied toad).